The primary structure comprises 197 residues: MPQDAPAGLAPGFLVAAPALADPNFNGSLVLMAEHHAQGALGFVVNRPGPITVADVLGGLDAGLRERAEGAGRADDLVLVGGPVQPERLWILFRPGPAAPEEGAVALGAGLALGGSRELLEALVRARDPGPYLLLLGYAGWAPLQVEREVGEGAWVPLPLQGDLVFDVPMEKRWETAVRRLGLDPAGFLVGGGGAEA.

This sequence belongs to the UPF0301 (AlgH) family.

The chain is UPF0301 protein AnaeK_4073 from Anaeromyxobacter sp. (strain K).